The primary structure comprises 132 residues: Sodium/calcium exchanger regulatory protein 1 (132 aa).

Residues arginine 126 and tyrosine 128 each contribute to the (9Z)-hexadecenoate site.

The protein belongs to the calycin superfamily. Fatty-acid binding protein (FABP) family. Interacts with Na(+)/Ca(2+) exchanger NCXSQ1; ReP1-NCXSQ phosphorylation does not affect the interaction. Post-translationally, phosphorylated. Phosphorylation may result in the release of the bound fatty acid. In terms of tissue distribution, expressed in the optic nerve (at protein level).

Its subcellular location is the cytoplasm. The protein localises to the membrane. Its function is as follows. Binds and may transport fatty acids such as palmitoleate. Also binds poly-phosphoinositides including phosphatidylinositol 4-phosphate (PtdIns(4)P), phosphatidylinositol 4,5-bisphosphate (PtdIns(4,5)P2) and phosphatidylinositol 3,4,5-trisphosphate (PtdIns(3,4,5)P3), and phosphatidic acid. When phosphorylated, stimulates the activity of optic nerve Na(+)/Ca(2+) exchanger. This is Sodium/calcium exchanger regulatory protein 1 from Doryteuthis pealeii (Longfin inshore squid).